The following is a 634-amino-acid chain: AAl-toxin cluster-specific transcription factor ALT13 (634 aa).

The segment at residues 30 to 56 is a DNA-binding region (zn(2)-C6 fungal-type); the sequence is CENCKRRKVRCSGANPCEQCLKVNVHC. Residues 66 to 89 are disordered; it reads RRSVPNSGADKNNQQGDTDRHNGA. Polar residues predominate over residues 69 to 81; that stretch reads VPNSGADKNNQQG.

The protein localises to the nucleus. In terms of biological role, transcription factor that regulates the expression of the gene cluster that mediates the biosynthesis of AAL-toxins, sphinganine-analog mycotoxins responsible for Alternaria stem canker on tomato by the tomato pathotype. The protein is AAl-toxin cluster-specific transcription factor ALT13 of Alternaria alternata (Alternaria rot fungus).